The sequence spans 465 residues: Putrescine aminotransferase (465 aa).

Pyridoxal 5'-phosphate-binding positions include 150-151 (GT) and Gln274. At Lys300 the chain carries N6-(pyridoxal phosphate)lysine. Residue Thr332 participates in pyridoxal 5'-phosphate binding.

This sequence belongs to the class-III pyridoxal-phosphate-dependent aminotransferase family. Putrescine aminotransferase subfamily. Requires pyridoxal 5'-phosphate as cofactor.

The catalysed reaction is an alkane-alpha,omega-diamine + 2-oxoglutarate = an omega-aminoaldehyde + L-glutamate. It catalyses the reaction putrescine + 2-oxoglutarate = 1-pyrroline + L-glutamate + H2O. It carries out the reaction cadaverine + 2-oxoglutarate = 5-aminopentanal + L-glutamate. Its pathway is amine and polyamine degradation; putrescine degradation; 4-aminobutanal from putrescine (transaminase route): step 1/1. Catalyzes the aminotransferase reaction from putrescine to 2-oxoglutarate, leading to glutamate and 4-aminobutanal, which spontaneously cyclizes to form 1-pyrroline. This is the first step in one of two pathways for putrescine degradation, where putrescine is converted into 4-aminobutanoate (gamma-aminobutyrate or GABA) via 4-aminobutanal. Also functions as a cadaverine transaminase in a a L-lysine degradation pathway to succinate that proceeds via cadaverine, glutarate and L-2-hydroxyglutarate. This is Putrescine aminotransferase from Cronobacter sakazakii (strain ATCC BAA-894) (Enterobacter sakazakii).